The following is a 488-amino-acid chain: HSPB1-associated protein 1 (488 aa).

The segment at 88–208 is interaction with HSPB1; that stretch reads ETTCNYVEAT…EDTPFLYPTR (121 aa). A JmjC domain is found at 124–288; that stretch reads WAYADYKYFV…HLARVEEAIT (165 aa). The segment covering 369–379 has biased composition (polar residues); that stretch reads QTGSQNLTTGT. The segment at 369–415 is disordered; that stretch reads QTGSQNLTTGTDKPEAASPFGPDLVPVAQRSEEPPSERGGIFGSDGK.

In terms of assembly, interacts with CRYAB and HSPB1. As to expression, widely expressed.

Its subcellular location is the cytoplasm. Its function is as follows. May play a role in cellular stress response. This Homo sapiens (Human) protein is HSPB1-associated protein 1 (HSPBAP1).